The following is a 3391-amino-acid chain: Genome polyprotein (3391 aa).

The segment at 1 to 15 (MNNQRKKAKNTPFNM) is interaction with host EXOC1. Topologically, residues 1-101 (MNNQRKKAKN…LNILNRRRRS (101 aa)) are cytoplasmic. The tract at residues 37-72 (MLQGRGPLKLFMALVAFLRFLTIPPTAGILKRWGTI) is hydrophobic; homodimerization of capsid protein C. Residues 101 to 114 (SAGMIIMLIPTVMA) constitute a propeptide, ER anchor for the capsid protein C, removed in mature form by serine protease NS3. The helical transmembrane segment at 102-122 (AGMIIMLIPTVMAFHLTTRNG) threads the bilayer. Over 123 to 238 (EPHMIVSRQE…GAWKHAQRIE (116 aa)) the chain is Extracellular. N183 carries N-linked (GlcNAc...) asparagine; by host glycosylation. Residues 239 to 259 (TWILRHPGFTIMAAILAYTIG) traverse the membrane as a helical segment. Residues 260-265 (TTHFQR) lie on the Cytoplasmic side of the membrane. The helical transmembrane segment at 266 to 280 (ALIFILLTAVAPSMT) threads the bilayer. At 281–725 (MRCIGISNRD…LHQVFGAIYG (445 aa)) the chain is on the extracellular side. Intrachain disulfides connect C283–C310, C340–C401, C354–C385, and C372–C396. N347 carries N-linked (GlcNAc...) asparagine; by host glycosylation. The segment at 378–391 (DRGWGNGCGLFGKG) is fusion peptide. N-linked (GlcNAc...) asparagine; by host glycosylation occurs at N433. Cystine bridges form between C465-C565 and C582-C613. The helical transmembrane segment at 726-746 (AAFSGVSWTMKILIGVIITWI) threads the bilayer. Residues 747-752 (GMNSRS) lie on the Cytoplasmic side of the membrane. Residues 753–773 (TSLSVSLVLVGIVTLYLGVMV) traverse the membrane as a helical segment. The Extracellular portion of the chain corresponds to 774-1195 (QADSGCVVSW…MVGATMTDDI (422 aa)). 6 disulfide bridges follow: C779–C790, C830–C918, C954–C998, C1055–C1104, C1066–C1088, and C1087–C1091. Residues N905 and N982 are each glycosylated (N-linked (GlcNAc...) asparagine; by host). Residue N1134 is glycosylated (N-linked (GlcNAc...) asparagine; by host). Residues 1196-1220 (GMGVTYLALLAAFKVRPTFAAGLLL) traverse the membrane as a helical segment. The Cytoplasmic segment spans residues 1221-1226 (RKLTSK). The chain crosses the membrane as a helical span at residues 1227 to 1245 (ELMMTTIGIVLLSQSTIPE). Residues 1246–1269 (TILELTDALALGMMVLKMVRNMEK) lie on the Lumenal side of the membrane. The chain crosses the membrane as a helical span at residues 1270 to 1290 (YQLAVTIMAILCVPNAVILQN). Residue A1291 is a topological domain, cytoplasmic. The helical transmembrane segment at 1292 to 1310 (WKVSCTILAVVSVSPLLLT) threads the bilayer. At 1311 to 1317 (SSQQKTD) the chain is on the lumenal side. The helical transmembrane segment at 1318 to 1338 (WIPLALTIKGLNPTAIFLTTL) threads the bilayer. Topologically, residues 1339–1346 (SRTSKKRS) are cytoplasmic. The chain crosses the membrane as a helical span at residues 1347–1367 (WPLNEAIMAVGMVSILASSLL). Over 1368–1370 (KND) the chain is Lumenal. The helical transmembrane segment at 1371 to 1391 (IPMTGPLVAGGLLTVCYVLTG) threads the bilayer. Over 1392–1447 (RSADLELERAADVKWEDQAEISGSSPILSITISEDGSMSIKNEEEEQTLTILIRTG) the chain is Cytoplasmic. The interval 1398–1437 (LERAADVKWEDQAEISGSSPILSITISEDGSMSIKNEEEE) is interacts with and activates NS3 protease. Positions 1448-1468 (LLVISGLFPVSIPITAAAWYL) form an intramembrane region, helical. At 1469 to 2147 (WEVKKQRAGV…LSELPETLET (679 aa)) the chain is on the cytoplasmic side. In terms of domain architecture, Peptidase S7 spans 1476–1653 (AGVLWDVPSP…EKSIEDNPEI (178 aa)). Catalysis depends on charge relay system; for serine protease NS3 activity residues H1526, D1550, and S1610. The 157-residue stretch at 1655–1811 (DDIFRKRRLT…QSNAPIIDEE (157 aa)) folds into the Helicase ATP-binding domain. Residues 1659 to 1662 (RKRR) form an important for RNA-binding region. 1668–1675 (LHPGAGKT) contributes to the ATP binding site. The DEAH box motif lies at 1759-1762 (DEAH). Residues 1821-1988 (SGHEWVTDFK…IIPSMFEPER (168 aa)) form the Helicase C-terminal domain. N6-acetyllysine; by host is present on K1863. A helical membrane pass occupies residues 2148–2168 (LLLLTLLATVTGGIFLFLMSG). Topologically, residues 2169–2170 (RG) are lumenal. An intramembrane region (helical) is located at residues 2171–2191 (IGKMTLGMCCIITASVLLWYA). Residue Q2192 is a topological domain, lumenal. A helical transmembrane segment spans residues 2193–2213 (IQPHWIAASIILEFFLIVLLI). At 2214 to 2228 (PEPEKQRTPQDNQLT) the chain is on the cytoplasmic side. The chain crosses the membrane as a helical span at residues 2229 to 2249 (YVVIAILTVVAATMANEMGFL). Over 2250–2274 (EKTKKDLGLGSIATQQPESNILDID) the chain is Lumenal. Residues 2275-2295 (LRPASAWTLYAVATTFVTPML) constitute an intramembrane region (helical). The Lumenal segment spans residues 2296–2316 (RHSIENSSVNVSLTAIANQAT). N-linked (GlcNAc...) asparagine; by host glycans are attached at residues N2301 and N2305. The segment at residues 2317–2337 (VLMGLGKGWPLSKMDIGVPLL) is an intramembrane region (helical). Over 2338–2347 (AIGCYSQVNP) the chain is Lumenal. Residues 2348 to 2368 (ITLTAALLLLVAHYAIIGPGL) traverse the membrane as a helical segment. The Cytoplasmic portion of the chain corresponds to 2369 to 2413 (QAKATREAQKRAAAGIMKNPTVDGITVIDLDPIPYDPKFEKQLGQ). The helical transmembrane segment at 2414-2434 (VMLLVLCVTQVLMMRTTWALC) threads the bilayer. The Lumenal segment spans residues 2435-2459 (EALTLATGPISTLWEGNPGRFWNTT). An N-linked (GlcNAc...) asparagine; by host glycan is attached at N2457. A helical membrane pass occupies residues 2460–2480 (IAVSMANIFRGSYLAGAGLLF). The Cytoplasmic segment spans residues 2481-3391 (SIMKNTTNTR…REEEEAGVLW (911 aa)). An mRNA cap 0-1 NS5-type MT domain is found at 2493–2755 (TGNIGETLGE…DVDLGSGTRN (263 aa)). Position 2547 (S2547) interacts with S-adenosyl-L-methionine. Phosphoserine is present on S2547. The active-site For 2'-O-MTase activity is K2552. Residues 2568-2571 (VVDL) carry the SUMO-interacting motif motif. Positions 2577, 2578, 2595, 2596, 2622, and 2623 each coordinate S-adenosyl-L-methionine. Residue D2637 is the For 2'-O-MTase activity of the active site. I2638 is a binding site for S-adenosyl-L-methionine. Residues K2672 and E2708 each act as for 2'-O-MTase activity in the active site. S-adenosyl-L-methionine is bound at residue Y2710. Zn(2+) contacts are provided by E2929, H2933, C2938, and C2941. The RdRp catalytic domain maps to 3020–3169 (AMYADDTAGW…PLDDRFASAL (150 aa)). Zn(2+) is bound by residues H3203, C3219, and C3338.

It in the N-terminal section; belongs to the class I-like SAM-binding methyltransferase superfamily. mRNA cap 0-1 NS5-type methyltransferase family. As to quaternary structure, homodimer. Interacts (via N-terminus) with host EXOC1 (via C-terminus); this interaction results in EXOC1 degradation through the proteasome degradation pathway. Forms heterodimers with envelope protein E in the endoplasmic reticulum and Golgi. In terms of assembly, homodimer; in the endoplasmic reticulum and Golgi. Interacts with protein prM. Interacts with non-structural protein 1. As to quaternary structure, homodimer; Homohexamer when secreted. Interacts with envelope protein E. Interacts with host PRKAA1. Interacts (via N-terminus) with serine protease NS3. In terms of assembly, forms a heterodimer with serine protease NS3. May form homooligomers. As to quaternary structure, forms a heterodimer with NS2B. Interacts with NS4B. Interacts with unphosphorylated RNA-directed RNA polymerase NS5; this interaction stimulates RNA-directed RNA polymerase NS5 guanylyltransferase activity. Interacts with host SHFL. Interacts with host MAVS; this interaction inhibits the synthesis of IFN-beta. Interacts with host SHFL. Interacts with host AUP1; the interaction occurs in the presence of Dengue virus NS4B and induces lipophagy which facilitates production of virus progeny particles. May interact with host SRPRA and SEC61G. In terms of assembly, interacts with serine protease NS3. As to quaternary structure, homodimer. Interacts with host STAT2; this interaction inhibits the phosphorylation of the latter, and, when all viral proteins are present (polyprotein), targets STAT2 for degradation. Interacts with serine protease NS3. Interacts with host PAF1 complex; the interaction may prevent the recruitment of the PAF1 complex to interferon-responsive genes, and thus reduces the immune response. Post-translationally, specific enzymatic cleavages in vivo yield mature proteins. Cleavages in the lumen of endoplasmic reticulum are performed by host signal peptidase, whereas cleavages in the cytoplasmic side are performed by serine protease NS3. Signal cleavage at the 2K-4B site requires a prior NS3 protease-mediated cleavage at the 4A-2K site. Cleaved in post-Golgi vesicles by a host furin, releasing the mature small envelope protein M, and peptide pr. This cleavage is incomplete as up to 30% of viral particles still carry uncleaved prM. In terms of processing, N-glycosylated. Post-translationally, N-glycosylated. The excreted form is glycosylated and this is required for efficient secretion of the protein from infected cells. Acetylated by host KAT5. Acetylation modulates NS3 RNA-binding and unwinding activities and plays an important positive role for viral replication. In terms of processing, phosphorylated on serines residues. This phosphorylation may trigger NS5 nuclear localization. Post-translationally, sumoylation of RNA-directed RNA polymerase NS5 increases NS5 protein stability allowing proper viral RNA replication.

Its subcellular location is the virion. The protein localises to the host nucleus. It localises to the host cytoplasm. It is found in the host perinuclear region. The protein resides in the secreted. Its subcellular location is the virion membrane. The protein localises to the host endoplasmic reticulum membrane. It localises to the host mitochondrion. The catalysed reaction is Selective hydrolysis of -Xaa-Xaa-|-Yaa- bonds in which each of the Xaa can be either Arg or Lys and Yaa can be either Ser or Ala.. It carries out the reaction RNA(n) + a ribonucleoside 5'-triphosphate = RNA(n+1) + diphosphate. The enzyme catalyses a ribonucleoside 5'-triphosphate + H2O = a ribonucleoside 5'-diphosphate + phosphate + H(+). It catalyses the reaction ATP + H2O = ADP + phosphate + H(+). The catalysed reaction is a 5'-end (5'-triphosphoguanosine)-ribonucleoside in mRNA + S-adenosyl-L-methionine = a 5'-end (N(7)-methyl 5'-triphosphoguanosine)-ribonucleoside in mRNA + S-adenosyl-L-homocysteine. It carries out the reaction a 5'-end (N(7)-methyl 5'-triphosphoguanosine)-ribonucleoside in mRNA + S-adenosyl-L-methionine = a 5'-end (N(7)-methyl 5'-triphosphoguanosine)-(2'-O-methyl-ribonucleoside) in mRNA + S-adenosyl-L-homocysteine + H(+). Functionally, plays a role in virus budding by binding to the cell membrane and gathering the viral RNA into a nucleocapsid that forms the core of a mature virus particle. During virus entry, may induce genome penetration into the host cytoplasm after hemifusion induced by the surface proteins. Can migrate to the cell nucleus where it modulates host functions. Overcomes the anti-viral effects of host EXOC1 by sequestering and degrading the latter through the proteasome degradation pathway. Its function is as follows. Inhibits RNA silencing by interfering with host Dicer. In terms of biological role, prevents premature fusion activity of envelope proteins in trans-Golgi by binding to envelope protein E at pH6.0. After virion release in extracellular space, gets dissociated from E dimers. Acts as a chaperone for envelope protein E during intracellular virion assembly by masking and inactivating envelope protein E fusion peptide. prM is the only viral peptide matured by host furin in the trans-Golgi network probably to avoid catastrophic activation of the viral fusion activity in acidic Golgi compartment prior to virion release. prM-E cleavage is inefficient, and many virions are only partially matured. These uncleaved prM would play a role in immune evasion. Functionally, may play a role in virus budding. Exerts cytotoxic effects by activating a mitochondrial apoptotic pathway through M ectodomain. May display a viroporin activity. Its function is as follows. Binds to host cell surface receptor and mediates fusion between viral and cellular membranes. Envelope protein is synthesized in the endoplasmic reticulum in the form of heterodimer with protein prM. They play a role in virion budding in the ER, and the newly formed immature particle is covered with 60 spikes composed of heterodimer between precursor prM and envelope protein E. The virion is transported to the Golgi apparatus where the low pH causes dissociation of PrM-E heterodimers and formation of E homodimers. prM-E cleavage is inefficient, and many virions are only partially matured. These uncleaved prM would play a role in immune evasion. In terms of biological role, involved in immune evasion, pathogenesis and viral replication. Once cleaved off the polyprotein, is targeted to three destinations: the viral replication cycle, the plasma membrane and the extracellular compartment. Essential for viral replication. Required for formation of the replication complex and recruitment of other non-structural proteins to the ER-derived membrane structures. Excreted as a hexameric lipoparticle that plays a role against host immune response. Antagonizing the complement function. Binds to the host macrophages and dendritic cells. Inhibits signal transduction originating from Toll-like receptor 3 (TLR3). Mediates complement activation, which may contribute to the pathogenesis of the vascular leakage that occurs in severe dengue disease. Activates autophagy through the AMPK/ERK/mTOR signaling pathway. Mechanistically, acts as the assembly platform for STK11-AMPK interactions and promotes STK11-AMPK interactions. In turn, promotes phosphorylation of the AMPK kinase structural domain and activates AMPK, thereby positively regulating the AMPK/ERK/mTOR signaling pathway and inducing autophagy. Disrupts the host endothelial glycocalyx layer of host pulmonary microvascular endothelial cells, inducing degradation of sialic acid and shedding of heparan sulfate proteoglycans. NS1 induces expression of sialidases, heparanase, and activates cathepsin L, which activates heparanase via enzymatic cleavage. These effects are probably linked to the endothelial hyperpermeability observed in severe dengue disease. Functionally, component of the viral RNA replication complex that functions in virion assembly and antagonizes the host immune response. Its function is as follows. Required cofactor for the serine protease function of NS3. May have membrane-destabilizing activity and form viroporins. In terms of biological role, displays three enzymatic activities: serine protease, NTPase and RNA helicase. NS3 serine protease, in association with NS2B, performs its autocleavage and cleaves the polyprotein at dibasic sites in the cytoplasm: C-prM, NS2A-NS2B, NS2B-NS3, NS3-NS4A, NS4A-2K and NS4B-NS5. NS3 RNA helicase binds RNA and unwinds dsRNA in the 3' to 5' direction. Regulates the ATPase activity of the NS3 helicase activity. NS4A allows NS3 helicase to conserve energy during unwinding. Plays a role in the inhibition of the host innate immune response. Interacts with host MAVS and thereby prevents the interaction between RIGI and MAVS. In turn, IFN-beta production is impaired. Interacts with host AUP1 which mediates induction of lipophagy in host cells and facilitates production of virus progeny particles. Functionally, functions as a signal peptide for NS4B and is required for the interferon antagonism activity of the latter. Its function is as follows. Induces the formation of ER-derived membrane vesicles where the viral replication takes place. Inhibits interferon (IFN)-induced host STAT1 phosphorylation and nuclear translocation, thereby preventing the establishment of cellular antiviral state by blocking the IFN-alpha/beta pathway. In terms of biological role, replicates the viral (+) and (-) RNA genome, and performs the capping of genomes in the cytoplasm. NS5 methylates viral RNA cap at guanine N-7 and ribose 2'-O positions. Besides its role in RNA genome replication, also prevents the establishment of cellular antiviral state by blocking the interferon-alpha/beta (IFN-alpha/beta) signaling pathway. Inhibits host TYK2 and STAT2 phosphorylation, thereby preventing activation of JAK-STAT signaling pathway. May reduce immune responses by preventing the recruitment of the host PAF1 complex to interferon-responsive genes. This is Genome polyprotein from Aedimorphus (Red guenon).